Reading from the N-terminus, the 107-residue chain is Glutaredoxin 4 (107 aa).

Residues 4–106 (IDKIKQQINE…TLLKETATKH (103 aa)) form the Glutaredoxin domain. Residue Lys-21 participates in glutathione binding. Cys-29 lines the [2Fe-2S] cluster pocket. Residues Arg-58, Phe-70, and 83–84 (CD) contribute to the glutathione site.

Belongs to the glutaredoxin family. Monothiol subfamily. In terms of assembly, homodimer.

The protein localises to the cytoplasm. In terms of biological role, monothiol glutaredoxin involved in the biogenesis of iron-sulfur clusters. This chain is Glutaredoxin 4 (grxD), found in Haemophilus ducreyi (strain 35000HP / ATCC 700724).